The chain runs to 171 residues: Orange carotenoid-binding domain-containing protein (171 aa).

Positions 21–171 constitute an OCP N-terminal domain; the sequence is GDAVASTITV…ADMGVDPLAD (151 aa).

Belongs to the orange carotenoid-binding protein family. Requires 3'-hydroxyechinenone as cofactor.

Its subcellular location is the cellular thylakoid membrane. Its function is as follows. Might act as a photo-protectant, protecting against damage induced by excess light via a process known as non-photochemical quenching (NPQ). This is Orange carotenoid-binding domain-containing protein from Nostoc sp. (strain PCC 7120 / SAG 25.82 / UTEX 2576).